We begin with the raw amino-acid sequence, 620 residues long: Endoglucanase 6 (620 aa).

A signal peptide spans 1–22; the sequence is MEKFAPVAALLLLLLCFPVAFS. D78 serves as the catalytic Nucleophile. Residues H411, D463, and E472 contribute to the active site. Residues N554 and N564 are each glycosylated (N-linked (GlcNAc...) asparagine).

The protein belongs to the glycosyl hydrolase 9 (cellulase E) family.

The protein localises to the secreted. It carries out the reaction Endohydrolysis of (1-&gt;4)-beta-D-glucosidic linkages in cellulose, lichenin and cereal beta-D-glucans.. The protein is Endoglucanase 6 of Arabidopsis thaliana (Mouse-ear cress).